Reading from the N-terminus, the 941-residue chain is Glycine dehydrogenase (decarboxylating) (941 aa).

Lys692 carries the N6-(pyridoxal phosphate)lysine modification.

This sequence belongs to the GcvP family. In terms of assembly, the glycine cleavage system is composed of four proteins: P, T, L and H. Requires pyridoxal 5'-phosphate as cofactor.

It catalyses the reaction N(6)-[(R)-lipoyl]-L-lysyl-[glycine-cleavage complex H protein] + glycine + H(+) = N(6)-[(R)-S(8)-aminomethyldihydrolipoyl]-L-lysyl-[glycine-cleavage complex H protein] + CO2. The glycine cleavage system catalyzes the degradation of glycine. The P protein binds the alpha-amino group of glycine through its pyridoxal phosphate cofactor; CO(2) is released and the remaining methylamine moiety is then transferred to the lipoamide cofactor of the H protein. This Mycolicibacterium paratuberculosis (strain ATCC BAA-968 / K-10) (Mycobacterium paratuberculosis) protein is Glycine dehydrogenase (decarboxylating).